The chain runs to 1267 residues: MPAYFQRPENALKRANEFLEVGKKQPALDVLYDVIKSKKHRTWQKIHEPIMLKYLELCVDLRKSHLAKEGLYQYKNICQQVNIKSLEDVVRAYLKLAEEKTETAKEESQQMVLDIEDLDNIQTPESVLLSAVSGEDTQDRTDRLLLTPWVKFLWESYRQCLDLLRNNSKVERLYHDIAQQAFKFCLQYTRKAEFRKLCDNLRMHLGQIQRHHNQSTAINLNNPESQSMHLETRLVQLDSAISMELWQEAFKAVEDIHGLFALSKKPPKPQLMANYYNKVSTVFWKSGNALFHSCTLHRLYHLSREMRKNLTQEEMQRMSTRVLLATLSIPITPERTDIARLLDMDGIIVEKHRRLATLLGLQSPPTRQSLINDMVRFNLLQYVVPEVKELYNWLEVDFHPLKLCGRVTKVLNWVRDQAEKESDLQQYVPHLQNNTILRLLQQVAQIYQSIEFSRLASLVPFVDAFQLERSIVDAARHCDLQVRIDHSSRTLSFGSDLNYSTKEDSPVGPFLQNMPSEQIRNQLTAMSSSLAKAIQVIKPASILQDHEEQRQQAITAYLKNARKEHQRILARRQTIEERKERLESLNIQREKEELEQREAELQKVRKAEEERLRQEAKEREKERIMQEHEQIKKKTVRERLEQIKKTELGAKAFKDIDIEDLEELDPDFIMAKQVEQLEKEKKELQERLKNQEKKIDYFERAKRLEEIPLIKKAYEEQRIKDMELWELQEEERITNMKMEREKALEHKQRMSRMMEDKENFLSKIKAARSFIYEEKLKQFQERLVEERKKRLEERKKQRKEDRRKAFYHQKEEEAQRIREEQLKKEREERERLEQEQREEEEREYQERLRKLEEQERKQRARQQEIEERERRKEEERRAPEEKPNKEWAEREESGWRKRGEGESEWRRPVPDRDWRQEGREGREEPDREDRDLPFRRGGESARRGASDEKGLRRGCDDDRGPRRGGDDERPPRRGFDDDRGTRRGFDDDRGQRRGDDDRGPRRGMDDDRGPRRPIDDDRGPRRSDDDRGPRRGFDDDRGPRRGMDEPRGPRRGADDDWGPRRGGDDERGGRRGMDDSGPRRGEDSRPWKPLGRPGAGGWREREKAREESWGPPRDSGHDDDGGERDGDDQREGERFRERRSAREEGSAWRRGGGGGGGGEEQSSWRDSRREDFDREDRRERRDMRERRDDRERDIRGPQRDQDEGGSWRRGGEERREERKEERDAPPRPRERDRDSGEKSTWRSDKDKENPRRTKNETDDDGWTTVRR.

Positions 82–118 (NIKSLEDVVRAYLKLAEEKTETAKEESQQMVLDIEDL) form a coiled coil. The PCI domain occupies 315 to 498 (MQRMSTRVLL…RTLSFGSDLN (184 aa)). Composition is skewed to basic and acidic residues over residues 792 to 835 (EERK…LEQE), 844 to 1086 (YQER…DSRP), and 1098 to 1147 (WRER…EGSA). The tract at residues 792–1267 (EERKKQRKED…DDDGWTTVRR (476 aa)) is disordered. 3 tandem repeats follow at residues 956–965 (DDDRGPRRGG), 966–975 (DDERPPRRGF), and 976–985 (DDDRGTRRGF). A 12 X 10 AA approximate tandem repeats of D-[DE]-[DE]-R-[GP]-[GPQT]-R-R-[GPS]-[ADFGIM] region spans residues 956–1073 (DDDRGPRRGG…DDERGGRRGM (118 aa)). The stretch at 986 to 994 (DDDRGQRRG) is one 4; truncated repeat. 2 tandem repeats follow at residues 995 to 1004 (DDDRGPRRGM) and 1005 to 1014 (DDDRGPRRPI). Residues 1015–1023 (DDDRGPRRS) form a 7; truncated repeat. Repeat copies occupy residues 1024–1033 (DDDRGPRRGF) and 1034–1043 (DDDRGPRRGM). Residues 1044-1053 (DEPRGPRRGA) form a 10; approximate repeat. Repeat unit 11 spans residues 1054–1063 (DDDWGPRRGG). The stretch at 1064-1073 (DDERGGRRGM) is one 12; approximate repeat. Over residues 1150–1159 (RGGGGGGGGE) the composition is skewed to gly residues. Residues 1162–1256 (SSWRDSRRED…KENPRRTKNE (95 aa)) are compositionally biased toward basic and acidic residues.

This sequence belongs to the eIF-3 subunit A family. As to quaternary structure, component of the eukaryotic translation initiation factor 3 (eIF-3) complex, which is composed of 13 subunits: eif3a, eif3b, eif3c, eif3d, eif3e, eif3f, eif3g, eif3h, eif3i, eif3j, eif3k, eif3l and eif3m.

It is found in the cytoplasm. In terms of biological role, RNA-binding component of the eukaryotic translation initiation factor 3 (eIF-3) complex, which is involved in protein synthesis of a specialized repertoire of mRNAs and, together with other initiation factors, stimulates binding of mRNA and methionyl-tRNAi to the 40S ribosome. The eIF-3 complex specifically targets and initiates translation of a subset of mRNAs involved in cell proliferation. The chain is Eukaryotic translation initiation factor 3 subunit A (eif3a) from Danio rerio (Zebrafish).